The primary structure comprises 189 residues: Small ribosomal subunit protein uS7 (189 aa).

It belongs to the universal ribosomal protein uS7 family. Part of the 30S ribosomal subunit.

Functionally, one of the primary rRNA binding proteins, it binds directly to 16S rRNA where it nucleates assembly of the head domain of the 30S subunit. Is located at the subunit interface close to the decoding center. In Methanosarcina acetivorans (strain ATCC 35395 / DSM 2834 / JCM 12185 / C2A), this protein is Small ribosomal subunit protein uS7.